Consider the following 445-residue polypeptide: MSPESRKLLNIIILGIGFMFMFTAFQTSGNVAQTVISSLNSTSFHGSGYTSLAIIYSVFSASNLIAPSIVAVIGCQMSMFLSGLLYSAYIAMFIQPYTWSFYTLSVLIGIAAAVLWTAQGSCLTINSDDTTIGKHSGIFWALLQFSMLFGNLFIYLAWKGEINISDSDRRTVFIALTVISLVGSVLFFLIRTPESDDAQEDDISNSAADAEGTMSAQSCFAKAIDAFKRSLKLSITKEMLLLSILVAYTGLELTFYSGVYGTCIGSMKVFEADAKSLIGLSGIFVGLGEVLGGGLFGLLGKYNYFGRNPVVILGVVVHFLAFYMIYLYMPSDAPIASREGTYLRAFINPSKTIALACSFLLGLGDSCYNTQMLSILGSLYPDNSAPAFAVFKFVQSVSAAVAFFYSNYLLLHWQLLILVIFGFFGTISFFFVEWGLTRRSQYNSM.

Residues 8–28 (LLNIIILGIGFMFMFTAFQTS) traverse the membrane as a helical segment. N40 carries N-linked (GlcNAc...) asparagine glycosylation. The next 4 membrane-spanning stretches (helical) occupy residues 53–73 (AIIY…VAVI), 74–94 (GCQM…AMFI), 98–118 (TWSF…LWTA), and 138–158 (IFWA…YLAW). An N-linked (GlcNAc...) asparagine glycan is attached at N163. Transmembrane regions (helical) follow at residues 170-190 (RTVF…FFLI), 239-259 (MLLL…YSGV), 277-297 (LIGL…GLFG), 309-329 (PVVI…YLYM), 345-365 (AFIN…GLGD), 385-405 (APAF…AFFY), and 415-435 (LLIL…VEWG).

The protein belongs to the unc-93 family.

Its subcellular location is the membrane. In Xenopus tropicalis (Western clawed frog), this protein is UNC93-like protein MFSD11 (mfsd11).